The following is a 409-amino-acid chain: N-acetylglucosamine-6-phosphate deacetylase (409 aa).

Position 143 (glutamate 143) interacts with a divalent metal cation. 154–155 (AH) is a substrate binding site. The a divalent metal cation site is built by histidine 211 and histidine 232. Substrate contacts are provided by residues 235 to 236 (NA), arginine 243, and 269 to 272 (DGTH). Aspartate 294 acts as the Proton donor/acceptor in catalysis. 328-330 (LSG) is a substrate binding site.

Belongs to the metallo-dependent hydrolases superfamily. NagA family. A divalent metal cation serves as cofactor.

It catalyses the reaction N-acetyl-D-glucosamine 6-phosphate + H2O = D-glucosamine 6-phosphate + acetate. It functions in the pathway amino-sugar metabolism; N-acetylneuraminate degradation. Its function is as follows. Hydrolyzes the N-glycolyl group from N-glycolylglucosamine 6-phosphate (GlcNGc-6-P) in the N-glycolylneuraminic acid (Neu5Gc) degradation pathway. Although human is not able to catalyze formation of Neu5Gc due to the inactive CMAHP enzyme, Neu5Gc is present in food and must be degraded. The sequence is that of N-acetylglucosamine-6-phosphate deacetylase (AMDHD2) from Homo sapiens (Human).